The chain runs to 623 residues: MPLPFEQFQGKGVLGFLDSSSSPGYKIWANPEKLHGRVEEDLCFVVNNGGFSEPTSVLDSVRSPSPFVSSSTTTLSSSHGGPSGGGAAAATFSGADGKCDQMGFEDLDGVLSGGSPGQEQSIFRLIMAGDVVDPGSEFVGFDIGSGSDPVIDNPNPLFGYGFPFQNAPEEEKFQISINPNPGFFSDPPSSPPAKRLNSGQPGSQHLQWVFPFSDPGHESHDPFLTPPKIAGEDQNDQDQSAVIIDQLFSAAAELTTNGGDNNPVLAQGILARLNHNLNNNNDDTNNNPKPPFHRAASYITEALHSLLQDSSLSPPSLSPPQNLIFRIAAYRAFSETSPFLQFVNFTANQTILESFEGFDRIHIVDFDIGYGGQWASLIQELAGKRNRSSSAPSLKITAFASPSTVSDEFELRFTEENLRSFAGETGVSFEIELLNMEILLNPTYWPLSLFRSSEKEAIAVNLPISSMVSGYLPLILRFLKQISPNVVVCSDRSCDRNNDAPFPNGVINALQYYTSLLESLDSGNLNNAEAATSIERFCVQPSIQKLLTNRYRWMERSPPWRSLFGQCGFTPVTLSQTAETQAEYLLQRNPMRGFHLEKRQSSSPSLVLCWQRKELVTVSAWKC.

Disordered stretches follow at residues 62-90 and 179-203; these read RSPS…AAAA and PNPG…QPGS. The span at 63-80 shows a compositional bias: low complexity; sequence SPSPFVSSSTTTLSSSHG. The GRAS domain occupies 235-622; sequence NDQDQSAVII…KELVTVSAWK (388 aa). The segment at 242-311 is leucine repeat I (LRI); the sequence is VIIDQLFSAA…ALHSLLQDSS (70 aa). The VHIID stretch occupies residues 330-398; the sequence is YRAFSETSPF…SSAPSLKITA (69 aa). The short motif at 361–365 is the VHIID element; the sequence is IHIVD. Residues 413 to 448 are leucine repeat II (LRII); that stretch reads FTEENLRSFAGETGVSFEIELLNMEILLNPTYWPLS. A PFYRE region spans residues 458–545; the sequence is IAVNLPISSM…RFCVQPSIQK (88 aa). The interval 548–622 is SAW; sequence TNRYRWMERS…KELVTVSAWK (75 aa).

It belongs to the GRAS family. As to expression, expressed in seedlings, roots, leaves and flowers.

It is found in the nucleus. In terms of biological role, probable transcription factor involved in plant development. This is Scarecrow-like protein 22 (SCL22) from Arabidopsis thaliana (Mouse-ear cress).